The primary structure comprises 159 residues: Cytochrome c-type biogenesis protein CcmE (159 aa).

Over 1–8 (MNLRRKNR) the chain is Cytoplasmic. The helical; Signal-anchor for type II membrane protein transmembrane segment at 9-29 (LWVVCAVLAGLALTTALVLYA) threads the bilayer. The Periplasmic portion of the chain corresponds to 30–159 (LRANIDLFYT…PQRADKDTSS (130 aa)). The tract at residues 129-159 (KHDENYTPPEVEKAMQENHRRPQRADKDTSS) is disordered. H130 and Y134 together coordinate heme.

It belongs to the CcmE/CycJ family.

It is found in the cell inner membrane. Heme chaperone required for the biogenesis of c-type cytochromes. Transiently binds heme delivered by CcmC and transfers the heme to apo-cytochromes in a process facilitated by CcmF and CcmH. The sequence is that of Cytochrome c-type biogenesis protein CcmE from Salmonella paratyphi A (strain ATCC 9150 / SARB42).